The primary structure comprises 356 residues: Isopentenyl-diphosphate delta-isomerase (356 aa).

A substrate-binding site is contributed by 8–9 (RK). FMN-binding positions include 66–68 (AIT), Ser-96, and Asn-124. 96 to 98 (SQR) contributes to the substrate binding site. Gln-160 contributes to the substrate binding site. Glu-161 serves as a coordination point for Mg(2+). FMN is bound by residues Lys-201, Thr-231, 280 to 282 (GIR), and 301 to 302 (AL).

The protein belongs to the IPP isomerase type 2 family. As to quaternary structure, homooctamer. Dimer of tetramers. FMN serves as cofactor. NADPH is required as a cofactor. It depends on Mg(2+) as a cofactor.

The protein localises to the cytoplasm. It catalyses the reaction isopentenyl diphosphate = dimethylallyl diphosphate. Involved in the biosynthesis of isoprenoids. Catalyzes the 1,3-allylic rearrangement of the homoallylic substrate isopentenyl (IPP) to its allylic isomer, dimethylallyl diphosphate (DMAPP). This is Isopentenyl-diphosphate delta-isomerase from Methanococcus aeolicus (strain ATCC BAA-1280 / DSM 17508 / OCM 812 / Nankai-3).